The chain runs to 372 residues: Glutamate 5-kinase (372 aa).

Lysine 14 contacts ATP. Positions 54, 141, and 153 each coordinate substrate. An ATP-binding site is contributed by 173–174 (TD). Residues 280–358 (RGTLVLDDGA…EAIVRELGYM (79 aa)) enclose the PUA domain.

Belongs to the glutamate 5-kinase family.

The protein localises to the cytoplasm. It carries out the reaction L-glutamate + ATP = L-glutamyl 5-phosphate + ADP. It participates in amino-acid biosynthesis; L-proline biosynthesis; L-glutamate 5-semialdehyde from L-glutamate: step 1/2. Catalyzes the transfer of a phosphate group to glutamate to form L-glutamate 5-phosphate. The polypeptide is Glutamate 5-kinase (Pseudomonas syringae pv. tomato (strain ATCC BAA-871 / DC3000)).